Reading from the N-terminus, the 134-residue chain is DNA-binding protein inhibitor ID-2 (134 aa).

The tract at residues 1–24 (MKAFSPVRSVRKNSLSDHGLGISR) is disordered. Ser-14 and Ser-25 each carry phosphoserine. The bHLH domain maps to 23 to 75 (SRSKTPVDDPMSLLYNMNDCYSKLKELVPSIPQNKKVSKMEILQHVIDYILDL). A Nuclear export signal motif is present at residues 106-115 (LNTDISILSL).

Interacts with GATA4 and NKX2-5. Interacts with NR0B2. Interacts with CLOCK and BMAL1. Interacts with IFI204. Interacts with NEDD9/HEF1. Interacts with ASB4; this interaction promotes ID2 proteasomal degradation. In terms of processing, ubiquitinated in a ASB4-depedent manner, leading to proteasomal degradation. Phosphorylated in vitro by CDK1, PKA and PKC.

The protein localises to the cytoplasm. The protein resides in the nucleus. Its function is as follows. Transcriptional regulator (lacking a basic DNA binding domain) which negatively regulates the basic helix-loop-helix (bHLH) transcription factors by forming heterodimers and inhibiting their DNA binding and transcriptional activity. Implicated in regulating a variety of cellular processes, including cellular growth, senescence, differentiation, apoptosis, angiogenesis, and neoplastic transformation. Inhibits skeletal muscle and cardiac myocyte differentiation. Regulates the circadian clock by repressing the transcriptional activator activity of the CLOCK-BMAL1 heterodimer. Restricts the CLOCK and BMAL1 localization to the cytoplasm. Plays a role in both the input and output pathways of the circadian clock: in the input component, is involved in modulating the magnitude of photic entrainment and in the output component, contributes to the regulation of a variety of liver clock-controlled genes involved in lipid metabolism. The polypeptide is DNA-binding protein inhibitor ID-2 (ID2) (Bos taurus (Bovine)).